We begin with the raw amino-acid sequence, 255 residues long: MRHPLVMGNWKLNGSTNLVNELIAGLRKELSTVDGCGVAIAPPAIYLDQANHQLAGSRIALGAQNVDVNLSGAFTGETSAEMLKDIGAKYIIIGHSERRTYHKESDEFIAKKFGVLKDAGLIPVLCIGETEAENEAGQTEAVCARQLDAVLNTLGAKAFENTVVAYEPVWAIGTGKSATPAQAQAVHKFIRDHIAKQDAAVAEQVIIQYGGSVNAANAAELFTQPDIDGALVGGASLKADAFAVIVKAAADAKRG.

9–11 (NWK) serves as a coordination point for substrate. Residue His-95 is the Electrophile of the active site. Glu-167 acts as the Proton acceptor in catalysis. Substrate contacts are provided by residues Gly-173, Ser-212, and 233–234 (GG).

The protein belongs to the triosephosphate isomerase family. Homodimer.

Its subcellular location is the cytoplasm. The catalysed reaction is D-glyceraldehyde 3-phosphate = dihydroxyacetone phosphate. The protein operates within carbohydrate biosynthesis; gluconeogenesis. Its pathway is carbohydrate degradation; glycolysis; D-glyceraldehyde 3-phosphate from glycerone phosphate: step 1/1. Functionally, involved in the gluconeogenesis. Catalyzes stereospecifically the conversion of dihydroxyacetone phosphate (DHAP) to D-glyceraldehyde-3-phosphate (G3P). In Pectobacterium atrosepticum (strain SCRI 1043 / ATCC BAA-672) (Erwinia carotovora subsp. atroseptica), this protein is Triosephosphate isomerase.